Reading from the N-terminus, the 109-residue chain is Peptide chaperone MftB (109 aa).

It belongs to the peptide chaperone MftB family.

Peptide chaperone involved in the biosynthesis of the enzyme cofactor mycofactocin (MFT). Binds MftA and MftC with high affinity, and is essential for MftC activity on MftA, likely via the formation of a ternary complex. The polypeptide is Peptide chaperone MftB (Mycobacterium tuberculosis (strain ATCC 25618 / H37Rv)).